The chain runs to 306 residues: Agmatinase (306 aa).

Mn(2+) is bound by residues histidine 126, aspartate 149, histidine 151, aspartate 153, aspartate 230, and aspartate 232.

It belongs to the arginase family. Agmatinase subfamily. The cofactor is Mn(2+).

It carries out the reaction agmatine + H2O = urea + putrescine. It participates in amine and polyamine biosynthesis; putrescine biosynthesis via agmatine pathway; putrescine from agmatine: step 1/1. In terms of biological role, catalyzes the formation of putrescine from agmatine. The polypeptide is Agmatinase (Shigella dysenteriae serotype 1 (strain Sd197)).